The chain runs to 361 residues: Ribosomal RNA large subunit methyltransferase M (361 aa).

Residues Ser-187, 220-223, Asp-239, Asp-259, and Asp-276 contribute to the S-adenosyl-L-methionine site; that span reads CPGG. Lys-305 acts as the Proton acceptor in catalysis.

It belongs to the class I-like SAM-binding methyltransferase superfamily. RNA methyltransferase RlmE family. RlmM subfamily. As to quaternary structure, monomer.

It is found in the cytoplasm. The catalysed reaction is cytidine(2498) in 23S rRNA + S-adenosyl-L-methionine = 2'-O-methylcytidine(2498) in 23S rRNA + S-adenosyl-L-homocysteine + H(+). Functionally, catalyzes the 2'-O-methylation at nucleotide C2498 in 23S rRNA. The polypeptide is Ribosomal RNA large subunit methyltransferase M (Shewanella putrefaciens (strain CN-32 / ATCC BAA-453)).